A 300-amino-acid chain; its full sequence is L-arabinolactonase (300 aa).

A divalent metal cation is bound by residues E22, N156, and D205.

The protein belongs to the SMP-30/CGR1 family. A divalent metal cation serves as cofactor.

It catalyses the reaction L-arabinono-1,4-lactone + H2O = L-arabinonate + H(+). Catalyzes the cleavage of L-arabino-gamma-lactone to L-arabonate. Is involved in a degradation pathway of L-arabinose that allows A.brasilense to grow on L-arabinose as a sole carbon source. Can also use D-galactono-1,4-lactone as substrate in vitro; however, the enzyme is probably not involved in the metabolism of D-galactose in vivo. The sequence is that of L-arabinolactonase (araB) from Azospirillum brasilense.